The following is a 1070-amino-acid chain: MLRDANEGMSTIPGFSQIQFEGFCRFIDRGLMEELNKFPKIEDTDQEIEFQLFVETYQLVEPLIKERDAVHESLTYCSELYVPAGLIWKTGKDIQEQTIFIGNIPLMNSLGTSIVNGIYRIVINQILQSPGIYYRSELDHNGISVYTGTIISDWGGRSELEIDRKARIWARVSRKQKISILVPSSAMGSNLKEIIDNVCYPEIFLSFPNDKEKKKIGSKENAILEFYQQFACVGGDPVFSESLCKELQKKFFQQRCELGRIGRRNMNRRLNLDIPHNITFLLPRDVLAAADHLIGMKFGMGTLDDMNHLKNKRIRSVADLLQDQFGLAMVRLENAVRGTIGGAIRQKLIPTPHNLVTSTPLTTTYESFFGLHPLSQVLDRTNPLTQIVHGRKSSYLGPGGLTGRTASFRIRDIHPSHYGRICPIDTSEGINVGLIGSLAIHARIGHWGSLERPFYEISERSKGVRVIYLSPSIDEYYMVTAGNSLALNHGIQEEQVVPARYRQEFLTIAWEQIQLRSIFPFQYFSVGASLIPFIEHNDANRALMSSNMQRQAVPLSRSEKCIVGTGLERQAALDSGVSAIAEHEGKIIYTDTDKIILSGNGATLSIPLVMYQRSNKNTCMHQKPQVSRGKCIKKGQILADGAATVGGELALGKNVLVAYMPWEGYNFEDAVLISERLVYGDIYTSFHIRKYEIQTHVTSQGPERITNEIPHLEAHLLRNLDRNGIVMLGSWVETGDILVGKLTPQVAKESSYAPEDRLLRAILGIQVSTAKETCLKLPIGGRGRVIDVRWIHKKGGSSYNPETIRVYISQKREIKVGDKVAGRHGNKGIISKILPRQDMPYLQDGTPVDMVFNPLGVPSRMNVGQIFECSLGLAGGLLDRHYRIAPFDERYEQEASRKLVFSELYEASKQTANPWVFEPEYPGKSRIFDGRTGDPFAQPVIIGKSYILKLIHQVDDKIHGRSSGHYALVTQQPLRGRAKQGGQRVGEMEVWALEGFGVAHILQEMLTYKSDHIRARQEVLGTTIIGGTIPNPEDAPESFRLLVRELRSLALELNHFLVSEKNFQINRKEA.

It belongs to the RNA polymerase beta chain family. In plastids the minimal PEP RNA polymerase catalytic core is composed of four subunits: alpha, beta, beta', and beta''. When a (nuclear-encoded) sigma factor is associated with the core the holoenzyme is formed, which can initiate transcription.

It localises to the plastid. It is found in the chloroplast. The enzyme catalyses RNA(n) + a ribonucleoside 5'-triphosphate = RNA(n+1) + diphosphate. Its function is as follows. DNA-dependent RNA polymerase catalyzes the transcription of DNA into RNA using the four ribonucleoside triphosphates as substrates. The polypeptide is DNA-directed RNA polymerase subunit beta (Nandina domestica (Heavenly bamboo)).